Consider the following 1129-residue polypeptide: ATP-dependent DNA helicase mph1 (1129 aa).

Disordered regions lie at residues 1 to 101 (MTGS…FEDA), 124 to 222 (TQLT…QNEG), and 236 to 306 (DAFD…TQHK). Positions 45–63 (DGTASDVRRRPSENRESQR) are enriched in basic and acidic residues. Composition is skewed to polar residues over residues 203–222 (NTKA…QNEG) and 242–285 (ISLS…QTDQ). Residues 297–306 (QKDEPPTQHK) are compositionally biased toward basic and acidic residues. The 169-residue stretch at 331 to 499 (IAQKGLFHNL…AVIDGLDIAR (169 aa)) folds into the Helicase ATP-binding domain. ATP is bound at residue 344-351 (LPTGLGKT). Residues 447–450 (DEAH) carry the DEAH box motif. The region spanning 674–843 (VLNHFMDAGE…GSRFTFHDDI (170 aa)) is the Helicase C-terminal domain. Disordered stretches follow at residues 863–930 (IPDE…VEIP), 1018–1060 (RQGD…STED), and 1072–1129 (SVVK…DSDD). 2 stretches are compositionally biased toward basic residues: residues 877–889 (RRGR…PKKF) and 1028–1044 (SPRH…KPRY). Over residues 1077–1086 (QKQQPFYSSQ) the composition is skewed to polar residues.

This sequence belongs to the DEAD box helicase family. DEAH subfamily. FANCM sub-subfamily. As to quaternary structure, interacts with the MHF histone-fold complex to form the FANCM-MHF complex.

It is found in the nucleus. The enzyme catalyses ATP + H2O = ADP + phosphate + H(+). Its function is as follows. ATP-dependent DNA helicase involved in DNA damage repair by homologous recombination and in genome maintenance. Capable of unwinding D-loops. Plays a role in limiting crossover recombinants during mitotic DNA double-strand break (DSB) repair. Component of a FANCM-MHF complex which promotes gene conversion at blocked replication forks, probably by reversal of the stalled fork. The chain is ATP-dependent DNA helicase mph1 from Aspergillus oryzae (strain ATCC 42149 / RIB 40) (Yellow koji mold).